Here is a 367-residue protein sequence, read N- to C-terminus: tRNA/tmRNA (uracil-C(5))-methyltransferase (367 aa).

5 residues coordinate S-adenosyl-L-methionine: Gln190, Tyr218, Asn223, Glu239, and Asp299. The Nucleophile role is filled by Cys324. Glu358 acts as the Proton acceptor in catalysis.

The protein belongs to the class I-like SAM-binding methyltransferase superfamily. RNA M5U methyltransferase family. TrmA subfamily.

It catalyses the reaction uridine(54) in tRNA + S-adenosyl-L-methionine = 5-methyluridine(54) in tRNA + S-adenosyl-L-homocysteine + H(+). The enzyme catalyses uridine(341) in tmRNA + S-adenosyl-L-methionine = 5-methyluridine(341) in tmRNA + S-adenosyl-L-homocysteine + H(+). In terms of biological role, dual-specificity methyltransferase that catalyzes the formation of 5-methyluridine at position 54 (m5U54) in all tRNAs, and that of position 341 (m5U341) in tmRNA (transfer-mRNA). In Yersinia enterocolitica serotype O:8 / biotype 1B (strain NCTC 13174 / 8081), this protein is tRNA/tmRNA (uracil-C(5))-methyltransferase.